A 314-amino-acid chain; its full sequence is MAVNGTALLLANVTYITVEILIGLCAIVGNVLVIWVVKLNPSLQTTTFYFIVSLALADIAVGVLVMPLAIVISLGITIQFYNCLFMTCLLLIFTHASIMSLLAIAVDRYLRVKLTVRYRRVTTQRRIWLALGLCWLVSFLVGLTPMFGWNMKLTSEHQRNVTFLSCQFSSVMRMDYMVYFSFFTWILIPLVVMCAIYLDIFYVIRNKLNQNFSSSKETGAFYGREFKTAKSLFLVLFLFAFSWLPLSIINCITYFHGEVPQIILYLGILLSHANSMMNPIVYAYKIKKFKETYLLIFKTYMICQSSDSLDSSTE.

The Extracellular portion of the chain corresponds to 1–14 (MAVNGTALLLANVT). 2 N-linked (GlcNAc...) asparagine glycosylation sites follow: asparagine 4 and asparagine 12. The chain crosses the membrane as a helical span at residues 15–37 (YITVEILIGLCAIVGNVLVIWVV). Residues 38–48 (KLNPSLQTTTF) are Cytoplasmic-facing. A helical membrane pass occupies residues 49-72 (YFIVSLALADIAVGVLVMPLAIVI). Over 73 to 84 (SLGITIQFYNCL) the chain is Extracellular. Cysteine 83 and cysteine 166 are oxidised to a cystine. Residues 85–106 (FMTCLLLIFTHASIMSLLAIAV) traverse the membrane as a helical segment. Residues 107 to 126 (DRYLRVKLTVRYRRVTTQRR) lie on the Cytoplasmic side of the membrane. The chain crosses the membrane as a helical span at residues 127 to 148 (IWLALGLCWLVSFLVGLTPMFG). At 149-177 (WNMKLTSEHQRNVTFLSCQFSSVMRMDYM) the chain is on the extracellular side. A glycan (N-linked (GlcNAc...) asparagine) is linked at asparagine 160. A helical transmembrane segment spans residues 178–198 (VYFSFFTWILIPLVVMCAIYL). Residues 199-231 (DIFYVIRNKLNQNFSSSKETGAFYGREFKTAKS) lie on the Cytoplasmic side of the membrane. The chain crosses the membrane as a helical span at residues 232 to 255 (LFLVLFLFAFSWLPLSIINCITYF). Residues 256–261 (HGEVPQ) lie on the Extracellular side of the membrane. The chain crosses the membrane as a helical span at residues 262–284 (IILYLGILLSHANSMMNPIVYAY). Residues 285 to 314 (KIKKFKETYLLIFKTYMICQSSDSLDSSTE) are Cytoplasmic-facing. Residue cysteine 303 is the site of S-palmitoyl cysteine attachment.

Belongs to the G-protein coupled receptor 1 family.

Its subcellular location is the cell membrane. Functionally, receptor for adenosine. The activity of this receptor is mediated by G proteins which inhibits adenylyl cyclase. This Canis lupus familiaris (Dog) protein is Adenosine receptor A3 (ADORA3).